A 270-amino-acid polypeptide reads, in one-letter code: Ribonuclease HII (270 aa).

An RNase H type-2 domain is found at 84 to 270; sequence RYIAGVDEVG…HRNSFLTKLL (187 aa). Positions 90, 91, and 186 each coordinate a divalent metal cation.

The protein belongs to the RNase HII family. The cofactor is Mn(2+). It depends on Mg(2+) as a cofactor.

Its subcellular location is the cytoplasm. It carries out the reaction Endonucleolytic cleavage to 5'-phosphomonoester.. Functionally, endonuclease that specifically degrades the RNA of RNA-DNA hybrids. The chain is Ribonuclease HII from Clostridium beijerinckii (strain ATCC 51743 / NCIMB 8052) (Clostridium acetobutylicum).